Consider the following 147-residue polypeptide: 3-dehydroquinate dehydratase (147 aa).

Tyr-23 (proton acceptor) is an active-site residue. Substrate is bound by residues Asn-74, His-80, and Asp-87. The active-site Proton donor is His-100. Substrate contacts are provided by residues 101–102 (LS) and Arg-111.

The protein belongs to the type-II 3-dehydroquinase family. As to quaternary structure, homododecamer.

The catalysed reaction is 3-dehydroquinate = 3-dehydroshikimate + H2O. Its pathway is metabolic intermediate biosynthesis; chorismate biosynthesis; chorismate from D-erythrose 4-phosphate and phosphoenolpyruvate: step 3/7. Its function is as follows. Catalyzes a trans-dehydration via an enolate intermediate. This Clostridium botulinum (strain 657 / Type Ba4) protein is 3-dehydroquinate dehydratase.